Consider the following 213-residue polypeptide: 3-demethoxyubiquinol 3-hydroxylase (213 aa).

Positions 62, 92, 95, 144, 176, and 179 each coordinate Fe cation.

Belongs to the COQ7 family. Fe cation serves as cofactor.

The protein resides in the cell membrane. The catalysed reaction is a 5-methoxy-2-methyl-3-(all-trans-polyprenyl)benzene-1,4-diol + AH2 + O2 = a 3-demethylubiquinol + A + H2O. Its pathway is cofactor biosynthesis; ubiquinone biosynthesis. In terms of biological role, catalyzes the hydroxylation of 2-nonaprenyl-3-methyl-6-methoxy-1,4-benzoquinol during ubiquinone biosynthesis. This is 3-demethoxyubiquinol 3-hydroxylase from Chromohalobacter salexigens (strain ATCC BAA-138 / DSM 3043 / CIP 106854 / NCIMB 13768 / 1H11).